Reading from the N-terminus, the 280-residue chain is F-actin-capping protein subunit alpha (280 aa).

This sequence belongs to the F-actin-capping protein alpha subunit family. In terms of assembly, heterodimer of an alpha and a beta subunit.

Its subcellular location is the cytoplasm. The protein resides in the cytoskeleton. Functionally, F-actin-capping proteins bind in a Ca(2+)-independent manner to the fast growing ends of actin filaments (barbed end) thereby blocking the exchange of subunits at these ends. Unlike other capping proteins (such as gelsolin and severin), these proteins do not sever actin filaments. The polypeptide is F-actin-capping protein subunit alpha (CAP01) (Candida albicans (strain SC5314 / ATCC MYA-2876) (Yeast)).